Here is a 142-residue protein sequence, read N- to C-terminus: Autophagy-related protein 31 (142 aa).

Its subcellular location is the cytoplasm. It localises to the cytoskeleton. The protein resides in the preautophagosomal structure. Plays a role in starvation-induced autophagy. Involved in mitophagy. Functions with ATG17 and ATG29 at the preautophagosomal structure (PAS) in order to form normal autophagosomes under starvation conditions. May be involved in microtubule function, such as chromosome segregation and karyogamy. The sequence is that of Autophagy-related protein 31 (CIS1) from Eremothecium gossypii (strain ATCC 10895 / CBS 109.51 / FGSC 9923 / NRRL Y-1056) (Yeast).